We begin with the raw amino-acid sequence, 199 residues long: Protein-methionine-sulfoxide reductase heme-binding subunit MsrQ (199 aa).

A run of 5 helical transmembrane segments spans residues 13 to 33 (VLLHLAGFLPLLWLILSVDQG), 79 to 99 (LLGLWCFFWATLHLVSYALLE), 120 to 140 (LGIISWLILLALAVTSPQIMM), 147 to 167 (WQKLHNFVYLVAILTPIHYLW), and 169 to 189 (VKTLSPQPILYALAALILLLL).

It belongs to the MsrQ family. Heterodimer of a catalytic subunit (MsrP) and a heme-binding subunit (MsrQ). FMN is required as a cofactor. The cofactor is heme b.

The protein resides in the cell inner membrane. In terms of biological role, part of the MsrPQ system that repairs oxidized periplasmic proteins containing methionine sulfoxide residues (Met-O), using respiratory chain electrons. Thus protects these proteins from oxidative-stress damage caused by reactive species of oxygen and chlorine generated by the host defense mechanisms. MsrPQ is essential for the maintenance of envelope integrity under bleach stress, rescuing a wide series of structurally unrelated periplasmic proteins from methionine oxidation. MsrQ provides electrons for reduction to the reductase catalytic subunit MsrP, using the quinone pool of the respiratory chain. This is Protein-methionine-sulfoxide reductase heme-binding subunit MsrQ from Pectobacterium atrosepticum (strain SCRI 1043 / ATCC BAA-672) (Erwinia carotovora subsp. atroseptica).